We begin with the raw amino-acid sequence, 276 residues long: Shikimate dehydrogenase (NADP(+)) (276 aa).

Shikimate-binding positions include 14–16 (SKS) and Thr61. The active-site Proton acceptor is the Lys65. Asp77 lines the NADP(+) pocket. Asn86 and Asp102 together coordinate shikimate. Residues 127–131 (GAGGA), 151–156 (NRTPDK), and Met214 each bind NADP(+). Residue Tyr216 coordinates shikimate. An NADP(+)-binding site is contributed by Gly238.

It belongs to the shikimate dehydrogenase family. Homodimer.

The enzyme catalyses shikimate + NADP(+) = 3-dehydroshikimate + NADPH + H(+). It participates in metabolic intermediate biosynthesis; chorismate biosynthesis; chorismate from D-erythrose 4-phosphate and phosphoenolpyruvate: step 4/7. Involved in the biosynthesis of the chorismate, which leads to the biosynthesis of aromatic amino acids. Catalyzes the reversible NADPH linked reduction of 3-dehydroshikimate (DHSA) to yield shikimate (SA). This Nitrosomonas europaea (strain ATCC 19718 / CIP 103999 / KCTC 2705 / NBRC 14298) protein is Shikimate dehydrogenase (NADP(+)).